A 443-amino-acid chain; its full sequence is Ribulose bisphosphate carboxylase large chain (443 aa).

Positions 89 and 139 each coordinate substrate. Lys-141 functions as the Proton acceptor in the catalytic mechanism. Lys-143 is a substrate binding site. Residues Lys-167, Asp-169, and Glu-170 each coordinate Mg(2+). Position 167 is an N6-carboxylysine (Lys-167). The active-site Proton acceptor is His-260. Substrate is bound by residues Arg-261, His-293, and Ser-345.

This sequence belongs to the RuBisCO large chain family. Type I subfamily. As to quaternary structure, heterohexadecamer of 8 large chains and 8 small chains; disulfide-linked. The disulfide link is formed within the large subunit homodimers. Mg(2+) is required as a cofactor. Post-translationally, the disulfide bond which can form in the large chain dimeric partners within the hexadecamer appears to be associated with oxidative stress and protein turnover.

Its subcellular location is the plastid. The protein resides in the chloroplast. It carries out the reaction 2 (2R)-3-phosphoglycerate + 2 H(+) = D-ribulose 1,5-bisphosphate + CO2 + H2O. The enzyme catalyses D-ribulose 1,5-bisphosphate + O2 = 2-phosphoglycolate + (2R)-3-phosphoglycerate + 2 H(+). Functionally, ruBisCO catalyzes two reactions: the carboxylation of D-ribulose 1,5-bisphosphate, the primary event in carbon dioxide fixation, as well as the oxidative fragmentation of the pentose substrate in the photorespiration process. Both reactions occur simultaneously and in competition at the same active site. In Buddleja davidii (Butterfly bush), this protein is Ribulose bisphosphate carboxylase large chain.